A 425-amino-acid polypeptide reads, in one-letter code: Serine--tRNA ligase (425 aa).

228 to 230 (TAE) contacts L-serine. 259–261 (RSE) is a binding site for ATP. Glu282 is a binding site for L-serine. 346-349 (EIAS) is an ATP binding site. Ser382 is a binding site for L-serine.

It belongs to the class-II aminoacyl-tRNA synthetase family. Type-1 seryl-tRNA synthetase subfamily. In terms of assembly, homodimer. The tRNA molecule binds across the dimer.

It localises to the cytoplasm. It carries out the reaction tRNA(Ser) + L-serine + ATP = L-seryl-tRNA(Ser) + AMP + diphosphate + H(+). The catalysed reaction is tRNA(Sec) + L-serine + ATP = L-seryl-tRNA(Sec) + AMP + diphosphate + H(+). It participates in aminoacyl-tRNA biosynthesis; selenocysteinyl-tRNA(Sec) biosynthesis; L-seryl-tRNA(Sec) from L-serine and tRNA(Sec): step 1/1. Catalyzes the attachment of serine to tRNA(Ser). Is also able to aminoacylate tRNA(Sec) with serine, to form the misacylated tRNA L-seryl-tRNA(Sec), which will be further converted into selenocysteinyl-tRNA(Sec). This chain is Serine--tRNA ligase, found in Rickettsia rickettsii (strain Iowa).